The chain runs to 219 residues: Histidinol-phosphate aminotransferase (219 aa).

The protein belongs to the class-II pyridoxal-phosphate-dependent aminotransferase family. Histidinol-phosphate aminotransferase subfamily. In terms of assembly, homodimer. The cofactor is pyridoxal 5'-phosphate.

The catalysed reaction is L-histidinol phosphate + 2-oxoglutarate = 3-(imidazol-4-yl)-2-oxopropyl phosphate + L-glutamate. It participates in amino-acid biosynthesis; L-histidine biosynthesis; L-histidine from 5-phospho-alpha-D-ribose 1-diphosphate: step 7/9. This chain is Histidinol-phosphate aminotransferase (hisC), found in Mycolicibacterium smegmatis (Mycobacterium smegmatis).